Consider the following 3013-residue polypeptide: Protein furry homolog-like (3013 aa).

An N-acetylserine modification is found at S2. The interval 90–109 (DESYEYRPRSSTKSKGDEQQ) is disordered. Phosphoserine is present on S844. Disordered regions lie at residues 878-897 (SSST…LAST) and 1476-1498 (VTSG…PDNK). A compositionally biased stretch (low complexity) spans 1476 to 1486 (VTSGTTSSSNT). S1914, S1935, S1941, S1945, and S1957 each carry phosphoserine. Position 1959 is a phosphothreonine (T1959). Phosphoserine is present on residues S1978, S2272, and S2454. Positions 2459 to 2492 (DKGDTPSLQEYQCSSSTPSLNLTNQEDTDESSEE) are disordered. Residues 2464-2483 (PSLQEYQCSSSTPSLNLTNQ) show a composition bias toward polar residues. Residue S2499 is modified to Phosphoserine. 2 disordered regions span residues 2508–2567 (LNSD…DTTS) and 2636–2660 (EEEA…EVQT). Polar residues-rich tracts occupy residues 2528–2539 (SEDSTGSITTEE) and 2555–2567 (DNAN…DTTS).

The protein belongs to the furry protein family. Widely expressed with higher expression in colon, placenta, brain and cells of lymphoid origin.

Plays a key role in maintaining the integrity of polarized cell extensions during morphogenesis, regulates the actin cytoskeleton and plays a key role in patterning sensory neuron dendritic fields by promoting avoidance between homologous dendrites as well as by limiting dendritic branching. May function as a transcriptional activator. This chain is Protein furry homolog-like (FRYL), found in Homo sapiens (Human).